The following is a 261-amino-acid chain: Putative cytochrome YdhU (261 aa).

The helical transmembrane segment at 25–45 (FWPVWLIIAGVLLVGMWLVLG) threads the bilayer. His77 is a binding site for heme b. 3 consecutive transmembrane segments (helical) span residues 81–101 (ALLF…MVGA), 108–128 (VAVH…FVLI), and 182–202 (VAYV…GLLC). Heme b is bound at residue His111. Heme b-binding residues include His223 and His237. Residues 224-244 (FALAFISLFFIFGHLYLCTTG) traverse the membrane as a helical segment. His237 contacts a menaquinone.

This sequence belongs to the PhsC family. Heme serves as cofactor.

The protein resides in the cell inner membrane. This chain is Putative cytochrome YdhU (ydhU), found in Escherichia coli (strain K12).